Reading from the N-terminus, the 293-residue chain is Elongation factor Ts (293 aa).

The segment at 80 to 83 is involved in Mg(2+) ion dislocation from EF-Tu; that stretch reads TDFV.

The protein belongs to the EF-Ts family.

The protein localises to the cytoplasm. Associates with the EF-Tu.GDP complex and induces the exchange of GDP to GTP. It remains bound to the aminoacyl-tRNA.EF-Tu.GTP complex up to the GTP hydrolysis stage on the ribosome. This Burkholderia multivorans (strain ATCC 17616 / 249) protein is Elongation factor Ts.